The sequence spans 461 residues: Serine/threonine-protein kinase ppk24, mitochondrial (461 aa).

The Protein kinase domain maps to F120–V416. ATP contacts are provided by residues I126–I134 and K153. The Proton acceptor role is filled by D256.

This sequence belongs to the protein kinase superfamily. Ser/Thr protein kinase family.

It is found in the mitochondrion. It carries out the reaction L-seryl-[protein] + ATP = O-phospho-L-seryl-[protein] + ADP + H(+). The enzyme catalyses L-threonyl-[protein] + ATP = O-phospho-L-threonyl-[protein] + ADP + H(+). In terms of biological role, has a role late in meiosis. This chain is Serine/threonine-protein kinase ppk24, mitochondrial (ppk24), found in Schizosaccharomyces pombe (strain 972 / ATCC 24843) (Fission yeast).